A 196-amino-acid polypeptide reads, in one-letter code: Imidazoleglycerol-phosphate dehydratase (196 aa).

It belongs to the imidazoleglycerol-phosphate dehydratase family.

It is found in the cytoplasm. It carries out the reaction D-erythro-1-(imidazol-4-yl)glycerol 3-phosphate = 3-(imidazol-4-yl)-2-oxopropyl phosphate + H2O. The protein operates within amino-acid biosynthesis; L-histidine biosynthesis; L-histidine from 5-phospho-alpha-D-ribose 1-diphosphate: step 6/9. This is Imidazoleglycerol-phosphate dehydratase from Desulforamulus reducens (strain ATCC BAA-1160 / DSM 100696 / MI-1) (Desulfotomaculum reducens).